The sequence spans 123 residues: Large ribosomal subunit protein uL29 (123 aa).

It belongs to the universal ribosomal protein uL29 family.

This Caenorhabditis elegans protein is Large ribosomal subunit protein uL29 (rpl-35).